We begin with the raw amino-acid sequence, 210 residues long: MTAWVGLTGGIGSGKSAAAQYFADLGVPRIDADAAAHSLTASDGIALPEIRRLFGDTVFDTQGLLRRDILRKEIFASPSRKALLESVMLPLIFSEIKKQQETFTDAVYGIVEIPLLTEKRQFISLIRRVLTISAPLEKRIGRVMARSGLTRGEVADIISHQASESERLLLADDVLLNDGSLKSLREKTMLLHAFYSGIFASKPTQGKHNG.

Residues Trp-4–Lys-202 enclose the DPCK domain. ATP is bound at residue Gly-12–Ala-17.

Belongs to the CoaE family.

The protein resides in the cytoplasm. The catalysed reaction is 3'-dephospho-CoA + ATP = ADP + CoA + H(+). Its pathway is cofactor biosynthesis; coenzyme A biosynthesis; CoA from (R)-pantothenate: step 5/5. Functionally, catalyzes the phosphorylation of the 3'-hydroxyl group of dephosphocoenzyme A to form coenzyme A. The polypeptide is Dephospho-CoA kinase (Neisseria gonorrhoeae (strain ATCC 700825 / FA 1090)).